The sequence spans 192 residues: Cytochrome b-245 light chain (192 aa).

The Cytoplasmic portion of the chain corresponds to Gly2–Ala7. Residues Met8–Ala30 form a helical membrane-spanning segment. Residues Gly31 to Gln35 lie on the Extracellular side of the membrane. Residues Trp36–Glu53 traverse the membrane as a helical segment. Residues Tyr54–Glu69 lie on the Cytoplasmic side of the membrane. Residues Gln70–Phe80 lie within the membrane without spanning it. Residues Gly81–Asn86 are Cytoplasmic-facing. Residues Tyr87–Leu104 traverse the membrane as a helical segment. A topological domain (extracellular) is located at residue Leu105. Residues Ala106–Ile126 form a helical membrane-spanning segment. Residues Arg127 to Val192 lie on the Cytoplasmic side of the membrane. Positions Ile134–Val192 are disordered. Thr147 bears the Phosphothreonine mark. Residue Lys149 forms a Glycyl lysine isopeptide (Lys-Gly) (interchain with G-Cter in ubiquitin) linkage.

The protein belongs to the p22phox family. Component of the phagocyte NADPH oxidase core complex/cytochrome b558 complex, composed of CYBB (heavy chain (beta)) and CYBA (light chain (alpha)). Component of the phagocyte NADPH oxidase complex composed of an obligatory core heterodimer formed by the membrane proteins CYBA and CYBB and the cytosolic regulatory subunits NCF1/p47-phox, NCF2/p67-phox, NCF4/p40-phox and the small GTPase RAC1 or RAC2. Interacts with NCF1 (via SH3 domain). Interacts with SH3PXD2A. Interacts with DUOX1, DUOX2 and TPO. Interacts with NOX4; this interaction mediates superoxide generation. Interacts with calprotectin (S100A8/9). Interacts with GBP7. Interacts with NOXO1. Forms a heterodimer with NOX3 and is essential for activity and cell membrane localization of NOX3. Interacts with NOX1. In terms of processing, phosphorylation at Thr-147 enhances NADPH oxidase activity by promoting NCF1/p47-phox binding. Post-translationally, ubiquitinated at Lys-149 likely by RNF145.

It localises to the cell membrane. Subunit of NADPH oxidase complexes that is required for the NADPH oxidase activity that generates, in various cell types, superoxide from molecular oxygen utilizing NADPH as an electron donor. Subunit of the phagocyte NADPH oxidase complex that mediates the transfer of electrons from cytosolic NADPH to O2 to produce the superoxide anion (O2(-)). In the activated complex, electrons are first transferred from NADPH to flavin adenine dinucleotide (FAD) and subsequently transferred via two heme molecules to molecular oxygen, producing superoxide through an outer-sphere reaction. Activation of the NADPH oxidase complex is initiated by the assembly of cytosolic subunits of the NADPH oxidase complex with the core NADPH oxidase complex to form a complex at the plasma membrane or phagosomal membrane. This activation process is initiated by phosphorylation dependent binding of the cytosolic NCF1/p47-phox subunit to the C-terminus of CYBA/p22-phox. Aassociates with NOX3 to form a functional NADPH oxidase constitutively generating superoxide. This is Cytochrome b-245 light chain from Sus scrofa (Pig).